Here is a 780-residue protein sequence, read N- to C-terminus: ATP-dependent 6-phosphofructokinase, muscle type (780 aa).

An N-acetylthreonine modification is found at Thr-2. Residues 2–390 are N-terminal catalytic PFK domain 1; that stretch reads THEEHHAART…NWEVYKLLAH (389 aa). ATP contacts are provided by residues Gly-25, 88–89, and 118–121; these read RC and GDGS. Residue Asp-119 coordinates Mg(2+). At Ser-133 the chain carries Phosphoserine. Substrate is bound by residues 164 to 166, Arg-201, 208 to 210, Glu-264, Arg-292, and 298 to 301; these read SID, MGR, and HVQR. Catalysis depends on Asp-166, which acts as the Proton acceptor. The residue at position 377 (Ser-377) is a Phosphoserine. Residues 391 to 401 are interdomain linker; the sequence is IRPPAPKSGSY. A C-terminal regulatory PFK domain 2 region spans residues 402–780; it reads TVAVMNVGAP…SRKRSGEATV (379 aa). Residues Arg-471 and 528–532 each bind beta-D-fructose 2,6-bisphosphate; that span reads TVSNN. Ser-530 carries an O-linked (GlcNAc) serine glycan. An N6-(2-hydroxyisobutyryl)lysine modification is found at Lys-557. Residues Arg-566, 573 to 575, Glu-629, Arg-655, and 661 to 664 each bind beta-D-fructose 2,6-bisphosphate; these read MGG and HMQQ. Ser-667 carries the post-translational modification Phosphoserine. Residue Arg-735 participates in beta-D-fructose 2,6-bisphosphate binding. Ser-775 is subject to Phosphoserine; by PKA.

The protein belongs to the phosphofructokinase type A (PFKA) family. ATP-dependent PFK group I subfamily. Eukaryotic two domain clade 'E' sub-subfamily. Homo- and heterotetramers. Phosphofructokinase (PFK) enzyme functions as a tetramer composed of different combinations of 3 types of subunits, called PFKM (M), PFKL (L) and PFKP (P). The composition of the PFK tetramer differs according to the tissue type it is present in. The kinetic and regulatory properties of the tetrameric enzyme are dependent on the subunit composition, hence can vary across tissues. Interacts (via C-terminus) with HK1 (via N-terminal spermatogenic cell-specific region). It depends on Mg(2+) as a cofactor. Post-translationally, glcNAcylation decreases enzyme activity.

It is found in the cytoplasm. It carries out the reaction beta-D-fructose 6-phosphate + ATP = beta-D-fructose 1,6-bisphosphate + ADP + H(+). It participates in carbohydrate degradation; glycolysis; D-glyceraldehyde 3-phosphate and glycerone phosphate from D-glucose: step 3/4. With respect to regulation, allosterically activated by ADP, AMP, or fructose 2,6-bisphosphate, and allosterically inhibited by ATP or citrate. Functionally, catalyzes the phosphorylation of D-fructose 6-phosphate to fructose 1,6-bisphosphate by ATP, the first committing step of glycolysis. This is ATP-dependent 6-phosphofructokinase, muscle type (PFKM) from Oryctolagus cuniculus (Rabbit).